The sequence spans 621 residues: Glutathione-regulated potassium-efflux system protein KefC (621 aa).

13 consecutive transmembrane segments (helical) span residues His4–Val24, Leu26–Leu46, Ala54–Leu74, Gly90–Leu110, Val114–Met134, Phe149–Leu169, Leu178–Leu198, Val218–Val237, Gly238–Tyr257, Gly270–Val290, Leu294–Ile314, Arg326–Ala346, and Ala359–Thr379. In terms of domain architecture, RCK N-terminal spans Gln399 to Thr518. Residues Gly598 to Ala621 form a disordered region.

The protein belongs to the monovalent cation:proton antiporter 2 (CPA2) transporter (TC 2.A.37) family. KefC subfamily. In terms of assembly, homodimer. Interacts with the regulatory subunit KefF.

It is found in the cell inner membrane. Pore-forming subunit of a potassium efflux system that confers protection against electrophiles. Catalyzes K(+)/H(+) antiport. The sequence is that of Glutathione-regulated potassium-efflux system protein KefC from Klebsiella pneumoniae subsp. pneumoniae (strain ATCC 700721 / MGH 78578).